A 346-amino-acid chain; its full sequence is Low-temperature-induced cysteine proteinase (346 aa).

Residues 1–17 constitute a propeptide, activation peptide; sequence KLSKNKSDRYLPKVGDS. Intrachain disulfides connect Cys-39-Cys-81, Cys-73-Cys-114, Cys-172-Cys-223, Cys-256-Cys-268, and Cys-262-Cys-283. Cys-42 is an active-site residue. Catalysis depends on residues His-178 and Asn-198. Residue Asn-215 is glycosylated (N-linked (GlcNAc...) asparagine). The propeptide at 238 to 346 is removed in mature form; it reads NPPKPAPSPP…FGNGGKKSSS (109 aa).

It belongs to the peptidase C1 family.

In Solanum lycopersicum (Tomato), this protein is Low-temperature-induced cysteine proteinase.